The following is a 373-amino-acid chain: DNA replication and repair protein RecF (373 aa).

30 to 37 (GANGSGKT) lines the ATP pocket.

The protein belongs to the RecF family.

It is found in the cytoplasm. In terms of biological role, the RecF protein is involved in DNA metabolism; it is required for DNA replication and normal SOS inducibility. RecF binds preferentially to single-stranded, linear DNA. It also seems to bind ATP. This chain is DNA replication and repair protein RecF, found in Marinobacter nauticus (strain ATCC 700491 / DSM 11845 / VT8) (Marinobacter aquaeolei).